Reading from the N-terminus, the 264-residue chain is MICOS complex subunit MIC27 (264 aa).

The N-terminal 27 residues, 1-27, are a transit peptide targeting the mitochondrion; sequence MAALRMGKLTTMPTGLIYASISVHVAK. Topologically, residues 28 to 110 are mitochondrial intermembrane; the sequence is EEESKKQLVK…YVYLKNPPRD (83 aa). Residues 111 to 129 traverse the membrane as a helical segment; it reads FLPKIGVITVSGLAGFISA. Residues 130–137 are Mitochondrial matrix-facing; it reads RKGSRFKR. Residues 138-155 traverse the membrane as a helical segment; that stretch reads IAYPLGLATLGATVCYPV. Over 156–264 the chain is Mitochondrial intermembrane; it reads QSVIIAKVAG…EDIDMYSTRS (109 aa). Positions 189 to 198 are enriched in basic and acidic residues; sequence KLPEHKEKTK. Positions 189 to 264 are disordered; that stretch reads KLPEHKEKTK…EDIDMYSTRS (76 aa). A compositionally biased stretch (low complexity) spans 223-238; the sequence is AELSSETKTKSTSGAT. Positions 245–256 are enriched in basic and acidic residues; the sequence is KLMDHGQSHPED.

This sequence belongs to the apolipoprotein O/MICOS complex subunit Mic27 family. In terms of assembly, component of the mitochondrial contact site and cristae organizing system (MICOS) complex, composed of at least MICOS10/MIC10, CHCHD3/MIC19, CHCHD6/MIC25, APOOL/MIC27, IMMT/MIC60, APOO/MIC23/MIC26 and QIL1/MIC13. This complex was also known under the names MINOS or MitOS complex. The MICOS complex associates with mitochondrial outer membrane proteins SAMM50, MTX1 and MTX2 (together described as components of the mitochondrial outer membrane sorting assembly machinery (SAM) complex) and DNAJC11, mitochondrial inner membrane protein TMEM11 and with HSPA9. The MICOS and SAM complexes together with DNAJC11 are part of a large protein complex spanning both membranes termed the mitochondrial intermembrane space bridging (MIB) complex. Interacts with MICOS10/MIC10, IMMT/MIC60 and APOO/MIC23/MIC26.

It is found in the mitochondrion inner membrane. Its subcellular location is the mitochondrion. In terms of biological role, component of the MICOS complex, a large protein complex of the mitochondrial inner membrane that plays crucial roles in the maintenance of crista junctions, inner membrane architecture, and formation of contact sites to the outer membrane. Specifically binds to cardiolipin (in vitro) but not to the precursor lipid phosphatidylglycerol. Plays a crucial role in crista junction formation and mitochondrial function. The chain is MICOS complex subunit MIC27 (APOL) from Bos taurus (Bovine).